We begin with the raw amino-acid sequence, 555 residues long: CTP synthase (555 aa).

Residues 1-267 form an amidoligase domain region; it reads MAKFVFVTGG…CKEVLDCLDL (267 aa). Residue S13 coordinates CTP. S13 contacts UTP. Residues 14–19 and D71 contribute to the ATP site; that span reads SIGKGI. Residues D71 and E141 each coordinate Mg(2+). Residues 148–150, 188–193, and K224 each bind CTP; these read DIE and KTKPTQ. UTP is bound by residues 188–193 and K224; that span reads KTKPTQ. A Glutamine amidotransferase type-1 domain is found at 292–534; the sequence is KVALVGKYVQ…IQAAQIRVPS (243 aa). G354 is a binding site for L-glutamine. Residue C381 is the Nucleophile; for glutamine hydrolysis of the active site. Residues 382-385, E405, and R462 each bind L-glutamine; that span reads LGMQ. Active-site residues include H507 and E509. The disordered stretch occupies residues 536 to 555; the sequence is PSEAFNPQSKIIEKKSLEQQ. Positions 546-555 are enriched in basic and acidic residues; it reads IIEKKSLEQQ.

Belongs to the CTP synthase family. As to quaternary structure, homotetramer.

The enzyme catalyses UTP + L-glutamine + ATP + H2O = CTP + L-glutamate + ADP + phosphate + 2 H(+). It catalyses the reaction L-glutamine + H2O = L-glutamate + NH4(+). It carries out the reaction UTP + NH4(+) + ATP = CTP + ADP + phosphate + 2 H(+). The protein operates within pyrimidine metabolism; CTP biosynthesis via de novo pathway; CTP from UDP: step 2/2. Allosterically activated by GTP, when glutamine is the substrate; GTP has no effect on the reaction when ammonia is the substrate. The allosteric effector GTP functions by stabilizing the protein conformation that binds the tetrahedral intermediate(s) formed during glutamine hydrolysis. Inhibited by the product CTP, via allosteric rather than competitive inhibition. Catalyzes the ATP-dependent amination of UTP to CTP with either L-glutamine or ammonia as the source of nitrogen. Regulates intracellular CTP levels through interactions with the four ribonucleotide triphosphates. This is CTP synthase from Prochlorococcus marinus (strain NATL1A).